Reading from the N-terminus, the 638-residue chain is Rik1-associated factor 1 (638 aa).

WD repeat units follow at residues 297–336 (KEYS…CGIF), 486–525 (TTQK…KPLS), 544–583 (EVDA…PFIQ), and 587–626 (EMNS…GNKF).

Component of the Clr4 methyltransferase complex (ClrC) composed of at least clr4, rik1, pcu4, rbx1, raf1 and raf2. The cullin pcu4, rik1, raf1, raf2 and the ring-box protein rbx1 are components of an E3 ubiquitin ligase, whose activity is essential for heterochromatin assembly. Interacts with nup189.

It is found in the cytoplasm. Its subcellular location is the nucleus. The protein resides in the chromosome. Its function is as follows. Component of the Clr4 methyltransferase complex (ClrC) which contributes to the establishment of heterochromatin by specifically methylating histone H3 to form H3K9me. ClrC preferentially ubiquitylates H3K14 and ClrC-mediated H3 ubiquitination promotes clr4 methyltransferase activity for the methylation of H3K9. H3K9me represents a specific tag for epigenetic transcriptional repression by recruiting swi6/HP1 to methylated histones which leads to transcriptional silencing within centromeric heterochromatin, telomeric regions and at the silent mating-type loci. Has a role in both mitotic and meiotic chromosome segregation. The sequence is that of Rik1-associated factor 1 (raf1) from Schizosaccharomyces pombe (strain 972 / ATCC 24843) (Fission yeast).